Reading from the N-terminus, the 1273-residue chain is Kinesin-like protein KIN-14A (1273 aa).

Positions M1–L52 are disordered. The stretch at A59 to Y89 forms a coiled coil. Positions N142–T456 constitute a Kinesin motor domain. Residue G223–T230 participates in ATP binding. 3 coiled-coil regions span residues I466 to L511, Q559 to S595, and T627 to E657. Disordered stretches follow at residues K827–V847 and Q1136–S1157. Over residues T830–P846 the composition is skewed to low complexity.

The protein belongs to the TRAFAC class myosin-kinesin ATPase superfamily. Kinesin family. KIN-14 subfamily. Homodimer and heterodimer with KCA2. Interacts with CDKA-1. Interacts with AL1, a geminivirus (TGMV) protein essential for viral replication. Interacts with LUE1/KSS. In terms of processing, part of the phosphorylation is not CDK-dependent. Widely expressed.

The protein localises to the nucleus. Its subcellular location is the cytoplasm. The protein resides in the cytoskeleton. It is found in the spindle. It localises to the chromosome. The protein localises to the cell membrane. Its subcellular location is the phragmoplast. Its function is as follows. Kinesin-like protein required for chloroplast movements and anchor to the plasma membrane. Mediates chloroplast movement via chloroplast actin (cp-actin) filaments. Required for the chloroplast avoidance response under high intensity blue light. Mediates redundantly with CHUP1 the nuclear avoidance response under high intensity blue light. May act as a mitotic kinesin. Probably involved in division plane determination. This is Kinesin-like protein KIN-14A from Arabidopsis thaliana (Mouse-ear cress).